Reading from the N-terminus, the 467-residue chain is Glutamyl-tRNA(Gln) amidotransferase subunit A (467 aa).

Active-site charge relay system residues include lysine 57 and serine 132. Serine 156 serves as the catalytic Acyl-ester intermediate.

The protein belongs to the amidase family. GatA subfamily. Heterotrimer of A, B and C subunits.

The enzyme catalyses L-glutamyl-tRNA(Gln) + L-glutamine + ATP + H2O = L-glutaminyl-tRNA(Gln) + L-glutamate + ADP + phosphate + H(+). In terms of biological role, allows the formation of correctly charged Gln-tRNA(Gln) through the transamidation of misacylated Glu-tRNA(Gln) in organisms which lack glutaminyl-tRNA synthetase. The reaction takes place in the presence of glutamine and ATP through an activated gamma-phospho-Glu-tRNA(Gln). The polypeptide is Glutamyl-tRNA(Gln) amidotransferase subunit A (Pseudothermotoga lettingae (strain ATCC BAA-301 / DSM 14385 / NBRC 107922 / TMO) (Thermotoga lettingae)).